We begin with the raw amino-acid sequence, 157 residues long: 2-C-methyl-D-erythritol 2,4-cyclodiphosphate synthase (157 aa).

Residues D8 and H10 each coordinate a divalent metal cation. 4-CDP-2-C-methyl-D-erythritol 2-phosphate is bound by residues 8-10 and 34-35; these read DVH and HS. H42 provides a ligand contact to a divalent metal cation. 4-CDP-2-C-methyl-D-erythritol 2-phosphate contacts are provided by residues 56-58, 61-65, 100-106, 132-135, F139, and R142; these read DIG, FPDTD, AQAPKMA, and TTTE.

The protein belongs to the IspF family. As to quaternary structure, homotrimer. Requires a divalent metal cation as cofactor.

The catalysed reaction is 4-CDP-2-C-methyl-D-erythritol 2-phosphate = 2-C-methyl-D-erythritol 2,4-cyclic diphosphate + CMP. It participates in isoprenoid biosynthesis; isopentenyl diphosphate biosynthesis via DXP pathway; isopentenyl diphosphate from 1-deoxy-D-xylulose 5-phosphate: step 4/6. In terms of biological role, involved in the biosynthesis of isopentenyl diphosphate (IPP) and dimethylallyl diphosphate (DMAPP), two major building blocks of isoprenoid compounds. Catalyzes the conversion of 4-diphosphocytidyl-2-C-methyl-D-erythritol 2-phosphate (CDP-ME2P) to 2-C-methyl-D-erythritol 2,4-cyclodiphosphate (ME-CPP) with a corresponding release of cytidine 5-monophosphate (CMP). This Pseudomonas fluorescens (strain SBW25) protein is 2-C-methyl-D-erythritol 2,4-cyclodiphosphate synthase.